The chain runs to 89 residues: Toxin To14 (89 aa).

The first 19 residues, 1–19, serve as a signal peptide directing secretion; sequence MNCLMLIFVVFLLAFGVEC. The LCN-type CS-alpha/beta domain occupies 21–85; the sequence is KDDYPVDTAK…SPTKTSGRCN (65 aa). Intrachain disulfides connect Cys-33/Cys-84, Cys-37/Cys-60, Cys-46/Cys-67, and Cys-50/Cys-69.

In terms of tissue distribution, expressed by the venom gland.

It is found in the secreted. Inhibits voltage-gated sodium channels (Nav). This Tityus obscurus (Amazonian scorpion) protein is Toxin To14.